We begin with the raw amino-acid sequence, 458 residues long: UDP-N-acetylmuramate--L-alanine ligase (458 aa).

Residue 118-124 (GTHGKTT) participates in ATP binding.

This sequence belongs to the MurCDEF family.

It is found in the cytoplasm. It carries out the reaction UDP-N-acetyl-alpha-D-muramate + L-alanine + ATP = UDP-N-acetyl-alpha-D-muramoyl-L-alanine + ADP + phosphate + H(+). The protein operates within cell wall biogenesis; peptidoglycan biosynthesis. Functionally, cell wall formation. This is UDP-N-acetylmuramate--L-alanine ligase from Clostridium botulinum (strain Langeland / NCTC 10281 / Type F).